A 162-amino-acid chain; its full sequence is Interleukin-15 (162 aa).

The N-terminal stretch at 1–29 (MRILKPYLRSTSIQCYLCLLLNSHFLTEA) is a signal peptide. A propeptide spanning residues 30–48 (GIHVFILGCISAGLPKTEA) is cleaved from the precursor. 2 cysteine pairs are disulfide-bonded: Cys83–Cys133 and Cys90–Cys136. Residues Asn113, Asn121, and Asn127 are each glycosylated (N-linked (GlcNAc...) asparagine).

This sequence belongs to the IL-15/IL-21 family.

It is found in the secreted. Cytokine that plays a major role in the development of inflammatory and protective immune responses to microbial invaders and parasites by modulating immune cells of both the innate and adaptive immune systems. Stimulates the proliferation of natural killer cells, T-cells and B-cells and promotes the secretion of several cytokines. In monocytes, induces the production of IL8 and monocyte chemotactic protein 1/CCL2, two chemokines that attract neutrophils and monocytes respectively to sites of infection. Unlike most cytokines, which are secreted in soluble form, IL15 is expressed in association with its high affinity IL15RA on the surface of IL15-producing cells and delivers signals to target cells that express IL2RB and IL2RG receptor subunits. Binding to its receptor triggers the phosphorylation of JAK1 and JAK3 and the recruitment and subsequent phosphorylation of signal transducer and activator of transcription-3/STAT3 and STAT5. In mast cells, induces the rapid tyrosine phosphorylation of STAT6 and thereby controls mast cell survival and release of cytokines such as IL4. The sequence is that of Interleukin-15 (IL15) from Ovis aries (Sheep).